The following is a 224-amino-acid chain: MLIEIPNVFSKQEVSHLREQLDARRWIDGNQTSGAMATTRKRNQQLDKDDPVAVALGQQIMDRLLAHPQFVSAALPLQFYPPLFNRYQGGETFGYHIDNAIRSTPDGMIRTDLSATLFLSEPESYQGGELVIQDTYGQQSIKLSAGSLVLYPSSSLHQVTPVLSGERTAAFMWLQSMVRDEGQRRLLFQLDQSIQTLTAQQAAEQELFNLTGIYHNLLRRWSEL.

The Fe2OG dioxygenase domain occupies 78–176; that stretch reads QFYPPLFNRY…RTAAFMWLQS (99 aa). Residues histidine 96, aspartate 98, and histidine 157 each coordinate Fe cation. Arginine 167 serves as a coordination point for 2-oxoglutarate.

The cofactor is Fe(2+). It depends on L-ascorbate as a cofactor.

This chain is PKHD-type hydroxylase Sbal195_0750, found in Shewanella baltica (strain OS195).